Consider the following 328-residue polypeptide: UPF0421 protein SAR1980 (328 aa).

Transmembrane regions (helical) follow at residues 19 to 39 (IAIF…IYAI), 61 to 81 (LPAT…FGDQ), 108 to 128 (VAVL…IFNF), and 132 to 152 (TLTA…VFPP).

This sequence belongs to the UPF0421 family.

The protein localises to the cell membrane. This Staphylococcus aureus (strain MRSA252) protein is UPF0421 protein SAR1980.